We begin with the raw amino-acid sequence, 626 residues long: Dual specificity testis-specific protein kinase 1 (626 aa).

The tract at residues 1-41 is disordered; that stretch reads MAGERPPLRGPGPGPGEVPGEGPPGPGGTGGGPGRGRPSSY. The span at 8 to 26 shows a compositional bias: pro residues; the sequence is LRGPGPGPGEVPGEGPPGP. Positions 57 to 314 constitute a Protein kinase domain; that stretch reads FHCAEKIGAG…TEITQHLEWI (258 aa). ATP is bound by residues 63-71 and K86; that span reads IGAGFFSEV. D175 acts as the Proton acceptor in catalysis. The residue at position 220 (S220) is a Phosphoserine; by autocatalysis. Disordered stretches follow at residues 331-373, 423-488, and 529-564; these read HNQG…NWGD, ETLV…QLPL, and WAGE…EPDE. At R338 the chain carries Omega-N-methylarginine. Residues 348–357 are compositionally biased toward basic and acidic residues; sequence PDPRLSRSRS. Positions 419-524 are required for interaction with YWHAB; that stretch reads VTTPETLVQP…NNNPPAVVVN (106 aa). The span at 476–485 shows a compositional bias: pro residues; sequence EPEPPGPAPQ. The interval 527–624 is required for interaction with PARVA; sequence QGWAGEPWNR…PTPSLQLPGA (98 aa). The tract at residues 527-626 is required for interaction with SPRED1 and SPRY2. Required for TESK1-mediated dephosphorylation of SPRY2 and SPRY2 inhibition of ERK phosphorylation; that stretch reads QGWAGEPWNR…PSLQLPGARS (100 aa).

This sequence belongs to the protein kinase superfamily. TKL Ser/Thr protein kinase family. As to quaternary structure, interacts (via both C- and N-termini) with SPRY4 (via C-terminus); the interaction inhibits TESK1 kinase activity. Interacts with TAOK1; the interaction inhibits TAOK1 kinase activity. Interacts (via C-terminus) with SPRED1 (via C-terminus); the interaction inhibits TESK1 kinase activity. Interacts (via C-terminus) with PARVA/PARVIN (via C-terminus); the interaction inhibits TESK1 kinase activity. Interacts with YWHAB/14-3-3 beta; the interaction is dependent on the phosphorylation of TESK1 Ser-437 and inhibits TESK1 kinase activity. Interacts with SPRY1, SPRY3 and SPRED2. Interacts (via C-terminus) with SPRY2 (via C-terminus); the interaction disrupts SPRY2 interaction with PPP2CA/PP2A-C, possibly by vesicular sequestration of SPRY2. Therefore dephosphorylation of SPRY2 by the serine/threonine-protein phosphatase 2A (PP2A) holoenzyme is lost, inhibiting its interaction with GRB2. It depends on Mg(2+) as a cofactor. Mn(2+) is required as a cofactor. In terms of processing, autophosphorylated on serine and tyrosine residues. As to expression, expressed in podocytes and renal tubular cells in the kidney (at protein level).

Its subcellular location is the cytoplasm. The protein resides in the perinuclear region. It is found in the cytoskeleton. The protein localises to the microtubule organizing center. It localises to the centrosome. Its subcellular location is the cell projection. The protein resides in the lamellipodium. It catalyses the reaction L-seryl-[protein] + ATP = O-phospho-L-seryl-[protein] + ADP + H(+). The catalysed reaction is L-threonyl-[protein] + ATP = O-phospho-L-threonyl-[protein] + ADP + H(+). It carries out the reaction L-tyrosyl-[protein] + ATP = O-phospho-L-tyrosyl-[protein] + ADP + H(+). With respect to regulation, activated by autophosphorylation on Ser-220. Kinase activity is inhibited by SPRED1. In terms of biological role, dual specificity protein kinase activity catalyzing autophosphorylation and phosphorylation of exogenous substrates on both serine/threonine and tyrosine residues. Regulates the cellular cytoskeleton by enhancing actin stress fiber formation via phosphorylation of cofilin and by preventing microtubule breakdown via inhibition of TAOK1/MARKK kinase activity. Inhibits podocyte motility via regulation of actin cytoskeletal dynamics and phosphorylation of CFL1. Positively regulates integrin-mediated cell spreading, via phosphorylation of cofilin. Suppresses ciliogenesis via multiple pathways; phosphorylation of CFL1, suppression of ciliary vesicle directional trafficking to the ciliary base, and by facilitating YAP1 nuclear localization where it acts as a transcriptional corepressor of the TEAD4 target genes AURKA and PLK1. Probably plays a central role at and after the meiotic phase of spermatogenesis. The protein is Dual specificity testis-specific protein kinase 1 (TESK1) of Homo sapiens (Human).